The following is a 240-amino-acid chain: Small ribosomal subunit protein uS2c (240 aa).

The protein belongs to the universal ribosomal protein uS2 family.

It is found in the plastid. The protein localises to the chloroplast. In Cycas taitungensis (Prince sago), this protein is Small ribosomal subunit protein uS2c (rps2).